Here is a 568-residue protein sequence, read N- to C-terminus: Protein yellow (568 aa).

The N-terminal stretch at Met1–Ala28 is a signal peptide. N-linked (GlcNAc...) asparagine glycosylation is found at Asn151 and Asn222.

The protein belongs to the major royal jelly protein family.

The protein resides in the secreted. In terms of biological role, controls the pigmentation pattern of the adult cuticle and larval mouth parts. The polypeptide is Protein yellow (y) (Drosophila subobscura (Fruit fly)).